Reading from the N-terminus, the 388-residue chain is Staphopain A (388 aa).

An N-terminal signal peptide occupies residues 1–25; that stretch reads MKRNFPKLIALSLILSLSVTPIANA. A propeptide spanning residues 26 to 214 is cleaved from the precursor; sequence ESNSNIKAKD…TSQFKSNNYT (189 aa). Catalysis depends on residues Cys238, His334, and Asn355.

This sequence belongs to the peptidase C47 family. As to quaternary structure, in the cytoplasm, prematurely activated/folded ScpA forms a stable non-covalent complex with ScpB. Cleavage leads to the activation of ScpA probably by an auto-catalytic manner.

It is found in the secreted. The enzyme catalyses Broad endopeptidase action on proteins including elastin, but rather limited hydrolysis of small-molecule substrates. Assays are conveniently made with hemoglobin, casein or Z-Phe-Arg-NHMec as substrate.. Prematurely activated/folded staphopain A is inhibited by staphostatin A (ScpB), which is probably required to protect staphylococcal cytoplasmic proteins from degradation by ScpA. In terms of biological role, cysteine protease that plays an important role in the inhibition of host innate immune response. Cleaves host elastins found in connective tissues, pulmonary surfactant protein A in the lungs, and the chemokine receptor CXCR2 on leukocytes. Proteolytic cleavage of surfactant protein A impairs bacterial phagocytosis by neutrophils while CXCR2 degradation blocks neutrophil activation and chemotaxis. Additionally, promotes vascular leakage by activating the plasma kallikerin/kinin system, resulting in hypotension. This Staphylococcus aureus (strain MSSA476) protein is Staphopain A (sspP).